The sequence spans 344 residues: 3,4-dihydroxy-2-butanone 4-phosphate synthase (344 aa).

Residues 1–202 (MILRRVTEAL…VSDLISYRLE (202 aa)) form a DHBP synthase region. D-ribulose 5-phosphate-binding positions include 27–28 (RE), Asp32, 139–143 (RTGHT), and Glu163. Glu28 provides a ligand contact to Mg(2+). Residue His142 participates in Mg(2+) binding. Positions 203–344 (NESLLKMFCQ…GLKLVETISL (142 aa)) are GTP cyclohydrolase II-like.

It in the N-terminal section; belongs to the DHBP synthase family. The protein in the C-terminal section; belongs to the GTP cyclohydrolase II family. The cofactor is Mg(2+). Mn(2+) is required as a cofactor.

The catalysed reaction is D-ribulose 5-phosphate = (2S)-2-hydroxy-3-oxobutyl phosphate + formate + H(+). It functions in the pathway cofactor biosynthesis; riboflavin biosynthesis; 2-hydroxy-3-oxobutyl phosphate from D-ribulose 5-phosphate: step 1/1. Catalyzes the conversion of D-ribulose 5-phosphate to formate and 3,4-dihydroxy-2-butanone 4-phosphate. In Helicobacter pylori (strain J99 / ATCC 700824) (Campylobacter pylori J99), this protein is 3,4-dihydroxy-2-butanone 4-phosphate synthase (ribB).